The sequence spans 332 residues: Tsukubadiene synthase (332 aa).

Mg(2+) contacts are provided by Asp75 and Glu80. The DDXXXE motif motif lies at 75–80; sequence DDHLDE. Substrate is bound at residue Arg165. The Mg(2+) site is built by Ser212, Ser216, and Glu220. Residues 212–220 carry the SXXXSXXXE motif motif; the sequence is SDLHSFQLE. 298–299 contacts substrate; that stretch reads RY.

Belongs to the terpene synthase family. The cofactor is Mg(2+).

It carries out the reaction (2E,6E,10E)-geranylgeranyl diphosphate = tsukubadiene + diphosphate. Catalyzes the formation of the 5-9-5 ring skeleton (3S,6S,11R,14S)-tsukubadiene from geranylgeranyl diphosphate (GGPP) via a 1,11-cyclization and a 10Re,14Re-cyclization. This chain is Tsukubadiene synthase, found in Streptomyces tsukubensis (strain DSM 42081 / NBRC 108919 / NRRL 18488 / 9993).